Consider the following 199-residue polypeptide: Chromophore lyase CpcT/CpeT 2 (199 aa).

Belongs to the CpcT/CpeT biliprotein lyase family.

Functionally, covalently attaches a chromophore to Cys residue(s) of phycobiliproteins. In Synechococcus sp. (strain JA-3-3Ab) (Cyanobacteria bacterium Yellowstone A-Prime), this protein is Chromophore lyase CpcT/CpeT 2.